Consider the following 420-residue polypeptide: Calreticulin (420 aa).

The N-terminal stretch at 1-18 (MKWGVVAVLATLVVAASA) is a signal peptide. Cysteine 106 and cysteine 140 are oxidised to a cystine. Residues tyrosine 110, lysine 112, tyrosine 131, and aspartate 138 each coordinate an alpha-D-glucoside. 7 tandem repeats follow at residues 194–205 (VASGSLYEDWDM), 213–224 (DPKASKPEDWDE), 230–241 (DPEDKKPEGWDD), 248–259 (DKDAKKPEDWDD), 263–273 (GTWEPPMIPNP), 277–287 (GEWKAKMIKNP), and 291–301 (GIWVAPDIDNP). The interval 194 to 259 (VASGSLYEDW…DAKKPEDWDD (66 aa)) is 4 X approximate repeats. Residues 210-220 (TIKDPKASKPE) are compositionally biased toward basic and acidic residues. The interval 210 to 272 (TIKDPKASKP…GTWEPPMIPN (63 aa)) is disordered. Over residues 221-230 (DWDEREEIAD) the composition is skewed to acidic residues. The interval 263 to 301 (GTWEPPMIPNPEYKGEWKAKMIKNPAYKGIWVAPDIDNP) is 3 X approximate repeats. Glutamate 321 is a binding site for an alpha-D-glucoside. Residues 357–376 (EEKAMFDKVKKEEDEKKAKD) show a composition bias toward basic and acidic residues. Residues 357-420 (EEKAMFDKVK…EEEESGHDEL (64 aa)) form a disordered region. Acidic residues-rich tracts occupy residues 385-398 (EAAE…EDKE) and 411-420 (EEEESGHDEL). The Prevents secretion from ER motif lies at 417–420 (HDEL).

Belongs to the calreticulin family.

The protein localises to the endoplasmic reticulum lumen. Molecular calcium-binding chaperone promoting folding, oligomeric assembly and quality control in the ER via the calreticulin/calnexin cycle. This lectin may interact transiently with almost all of the monoglucosylated glycoproteins that are synthesized in the ER. The polypeptide is Calreticulin (Chlamydomonas reinhardtii (Chlamydomonas smithii)).